The sequence spans 354 residues: Clavesin-1 (354 aa).

Positions 118-279 (IKRALIDGFP…EFGGTLPPYD (162 aa)) constitute a CRAL-TRIO domain. Residues 333-354 (AGTLKHEEKGENENTQPLLALD) form a disordered region. The segment covering 335 to 344 (TLKHEEKGEN) has biased composition (basic and acidic residues). Over residues 345-354 (ENTQPLLALD) the composition is skewed to polar residues.

As to quaternary structure, forms a complex with clathrin heavy chain and gamma-adaptin.

Its subcellular location is the golgi apparatus. It localises to the trans-Golgi network membrane. It is found in the early endosome membrane. The protein localises to the cytoplasmic vesicle. The protein resides in the clathrin-coated vesicle. Its function is as follows. Required for normal morphology of late endosomes and/or lysosomes in neurons. Binds phosphatidylinositol 3,5-bisphosphate (PtdIns(3,5)P2). This is Clavesin-1 (CLVS1) from Pongo abelii (Sumatran orangutan).